Consider the following 921-residue polypeptide: Valine--tRNA ligase (921 aa).

Positions 40 to 50 match the 'HIGH' region motif; it reads PNVTGSLHMGH. Positions 522–526 match the 'KMSKS' region motif; the sequence is KMSKS. Residue K525 coordinates ATP. Residues 849 to 921 adopt a coiled-coil conformation; sequence MADLIDKEAE…LQHKNRIESL (73 aa).

This sequence belongs to the class-I aminoacyl-tRNA synthetase family. ValS type 1 subfamily. In terms of assembly, monomer.

It localises to the cytoplasm. It carries out the reaction tRNA(Val) + L-valine + ATP = L-valyl-tRNA(Val) + AMP + diphosphate. Its function is as follows. Catalyzes the attachment of valine to tRNA(Val). As ValRS can inadvertently accommodate and process structurally similar amino acids such as threonine, to avoid such errors, it has a 'posttransfer' editing activity that hydrolyzes mischarged Thr-tRNA(Val) in a tRNA-dependent manner. In Legionella pneumophila (strain Lens), this protein is Valine--tRNA ligase.